A 427-amino-acid polypeptide reads, in one-letter code: Septin-8-B (427 aa).

The region spanning 39–305 is the Septin-type G domain; sequence QGFCFNILCV…ELYRRCKLEE (267 aa). Positions 49–56 are G1 motif; that stretch reads GETGIGKS. GTP is bound by residues 49–56, glycine 104, 185–193, glycine 239, and arginine 254; these read GETGIGKS and KADTISKSE. A G3 motif region spans residues 101-104; it reads DTVG. The G4 motif stretch occupies residues 184–187; the sequence is AKAD. Positions 320-407 form a coiled coil; sequence LQETYEAKRK…RRKVAMETLQ (88 aa). Over residues 406-418 the composition is skewed to polar residues; that stretch reads LQSQSFQATSQQP. The tract at residues 406-427 is disordered; sequence LQSQSFQATSQQPLKKDKDRKN.

It belongs to the TRAFAC class TrmE-Era-EngA-EngB-Septin-like GTPase superfamily. Septin GTPase family.

The sequence is that of Septin-8-B (sept8-b) from Xenopus laevis (African clawed frog).